A 246-amino-acid chain; its full sequence is MFSSKTEYDRGVNTFSPEGRIFQIEYAIEAIKLGSTSLGIQTPDAVIIAAEKRVPSTLVDPSSVNKILEIDHHIGTVLSGMVADARILVDHARVEAQNHRFTYDEPMSVESCALATCDLSVQFGESGGRKKLMSRPFGVSLLIAGVDENGPQLWQTDPSGTYTRYDAQAIGGGAEAAQTVFSERYHRNMTVEEAENLTVQILRQVMEEKLTKTSVEIAIVPVSTGRLQIYDQEQIQRIIDRQAEEN.

Belongs to the peptidase T1A family. In terms of assembly, the 26S proteasome consists of a 20S proteasome core and two 19S regulatory subunits. The 20S proteasome core is composed of 28 subunits that are arranged in four stacked rings, resulting in a barrel-shaped structure. The two end rings are each formed by seven alpha subunits, and the two central rings are each formed by seven beta subunits. The catalytic chamber with the active sites is on the inside of the barrel.

The protein localises to the cytoplasm. The protein resides in the nucleus. The proteasome is a multicatalytic proteinase complex which is characterized by its ability to cleave peptides with Arg, Phe, Tyr, Leu, and Glu adjacent to the leaving group at neutral or slightly basic pH. The proteasome has an ATP-dependent proteolytic activity. The sequence is that of Proteasome subunit alpha type-5 from Trypanosoma brucei brucei.